The sequence spans 154 residues: Transcriptional repressor NrdR (154 aa).

A zinc finger lies at 3–34 (CPFCRHSDSRVIDSRETDEGQAIRRRRSCPEC). The ATP-cone domain maps to 46-136 (VAVVKRSGVT…VYRSFSSADD (91 aa)).

The protein belongs to the NrdR family. Zn(2+) is required as a cofactor.

In terms of biological role, negatively regulates transcription of bacterial ribonucleotide reductase nrd genes and operons by binding to NrdR-boxes. The chain is Transcriptional repressor NrdR from Mycobacterium leprae (strain Br4923).